The following is a 57-amino-acid chain: MAVPFRRTSKTAKRKRRTHFKLSVPGMVTCPNCGEAKLSHRVCKACGQYKGKEVVSK.

Belongs to the bacterial ribosomal protein bL32 family.

The chain is Large ribosomal subunit protein bL32 from Lysinibacillus sphaericus (strain C3-41).